The sequence spans 610 residues: Glutamine--fructose-6-phosphate aminotransferase [isomerizing] (610 aa).

Cys2 acts as the Nucleophile; for GATase activity in catalysis. Residues 2–221 (CGIVGAVAQR…DGDVVDLQLA (220 aa)) form the Glutamine amidotransferase type-2 domain. SIS domains are found at residues 286-426 (AYKV…TRGR) and 459-600 (WADR…VDKP). Lys605 acts as the For Fru-6P isomerization activity in catalysis.

Homodimer.

The protein resides in the cytoplasm. It catalyses the reaction D-fructose 6-phosphate + L-glutamine = D-glucosamine 6-phosphate + L-glutamate. Functionally, catalyzes the first step in hexosamine metabolism, converting fructose-6P into glucosamine-6P using glutamine as a nitrogen source. This is Glutamine--fructose-6-phosphate aminotransferase [isomerizing] from Bordetella bronchiseptica (strain ATCC BAA-588 / NCTC 13252 / RB50) (Alcaligenes bronchisepticus).